The chain runs to 135 residues: Kappa-casein (135 aa).

O-linked (GalNAc...) threonine glycosylation occurs at Thr-96. Phosphoserine; alternate is present on Ser-114. Ser-114 carries O-linked (GalNAc...) serine; alternate glycosylation. O-linked (GalNAc...) threonine glycosylation occurs at Thr-131. Residue Ser-132 is modified to Phosphoserine.

It belongs to the kappa-casein family. In terms of tissue distribution, mammary gland specific. Secreted in milk.

It is found in the secreted. In terms of biological role, kappa-casein stabilizes micelle formation, preventing casein precipitation in milk. The chain is Kappa-casein (CSN3) from Equus grevyi (Grevy's zebra).